The chain runs to 507 residues: Pre-glycoprotein polyprotein GP complex (507 aa).

Glycine 2 carries N-myristoyl glycine; by host lipidation. Over 2-17 the chain is Extracellular; it reads GQVVTFLQSLPEVINE. Residues 18-33 form a helical membrane-spanning segment; sequence AINIALIAISIICILK. Residues 34–58 lie on the Cytoplasmic side of the membrane; that stretch reads GLVNFWKCGVVQLAIFLCLAGRKCD. Position 57 (cysteine 57) interacts with Zn(2+). Over 59-445 the chain is Extracellular; sequence GLMIDRRHEL…QGKTPIALTD (387 aa). Cystine bridges form between cysteine 86–cysteine 247, cysteine 292–cysteine 305, cysteine 314–cysteine 323, and cysteine 377–cysteine 398. 4 N-linked (GlcNAc...) asparagine; by host glycosylation sites follow: asparagine 89, asparagine 111, asparagine 179, and asparagine 240. Residues asparagine 378, asparagine 386, asparagine 403, and asparagine 408 are each glycosylated (N-linked (GlcNAc...) asparagine; by host). Residues 446–466 form a helical membrane-spanning segment; that stretch reads ICFWSLVFFTSTVFLQLVGIP. The Cytoplasmic segment spans residues 467–507; that stretch reads THRHLVGEGCPKPHRITSNSLCACGYYKIPKRPTRWVRKGK. The Zn(2+) site is built by histidine 468, histidine 470, cysteine 476, histidine 480, cysteine 488, and cysteine 490.

It belongs to the arenaviridae GPC protein family. Interacts with glycoprotein G2. Part of the GP complex (GP-C) together with glycoprotein G1 and glycoprotein G2. The GP-complex interacts with protein Z, which interacts with ribonucleocapsid; these interactions may induce virion budding. As to quaternary structure, homotrimer; disulfide-linked. In pre-fusion state, G1 homotrimers bind G2 homotrimers via ionic interactions. Part of the GP complex (GP-C) together with glycoprotein G2 and the stable signal peptide. The GP-complex interacts with protein Z, which interacts with ribonucleocapsid; these interactions may induce virion budding. In terms of assembly, homotrimer. Interacts with the stable signal peptide. In pre-fusion state, G2 homotrimers bind G1 homotrimers via ionic interactions. Part of the GP complex (GP-C) together with glycoprotein G1 and the stable signal peptide. Acidification in the endosome triggers rearrangements, which ultimately leads to a 6 helix bundle formed by the two heptad repeat domains (HR1 and HR2) in post-fusion state. The GP-complex interacts with protein Z, which interacts with ribonucleocapsid; these interactions may induce virion budding. In terms of processing, specific enzymatic cleavages in vivo yield mature proteins. GP-C polyprotein is cleaved in the endoplasmic reticulum by the host protease MBTPS1. Only cleaved glycoprotein is incorporated into virions. The SSP remains stably associated with the GP complex following cleavage by signal peptidase and plays crucial roles in the trafficking of GP through the secretory pathway. Post-translationally, myristoylation is necessary for GP2-mediated fusion activity.

The protein localises to the virion membrane. It is found in the host endoplasmic reticulum membrane. Its subcellular location is the host Golgi apparatus membrane. It localises to the host cell membrane. Its function is as follows. Functions as a cleaved signal peptide that is retained as the third component of the GP complex (GP-C). Helps to stabilize the spike complex in its native conformation. The SSP is required for efficient glycoprotein expression, post-translational maturation cleavage of G1 and G2, glycoprotein transport to the cell surface plasma membrane, formation of infectious virus particles, and acid pH-dependent glycoprotein-mediated cell fusion. Functionally, forms the virion spikes together with glycoprotein G2. The glycoprotein spike trimers are connected to the underlying matrix. Interacts with the host receptor leading to virus endocytosis. Forms the virion spikes together with glycoprotein G1. The glycoprotein spike trimers are connected to the underlying matrix. Class I viral fusion protein that directs fusion of viral and host endosomal membranes, leading to delivery of the nucleocapsid into the cytoplasm. Membrane fusion is mediated by irreversible conformational changes induced by acidification. The chain is Pre-glycoprotein polyprotein GP complex from Allpahuayo mammarenavirus (isolate Rat/Peru/CLHP-2472/1997) (ALLV).